A 277-amino-acid polypeptide reads, in one-letter code: Protein RKD3 (277 aa).

One can recognise an RWP-RK domain in the interval 142–226 (KRIIMKRRYR…LGNTKGRTPK (85 aa)). Residues 201–246 (RKLTSLNALIANLKDLLGNTKGRTPKSKLRNALELLEMEKKMIEEV) are a coiled coil.

It localises to the nucleus. Functionally, putative transcription factor. The sequence is that of Protein RKD3 (RKD3) from Arabidopsis thaliana (Mouse-ear cress).